A 240-amino-acid polypeptide reads, in one-letter code: Sugar fermentation stimulation protein homolog (240 aa).

The protein belongs to the SfsA family.

The chain is Sugar fermentation stimulation protein homolog from Pasteurella multocida (strain Pm70).